We begin with the raw amino-acid sequence, 212 residues long: Ribonuclease P protein component 3 (212 aa).

It belongs to the eukaryotic/archaeal RNase P protein component 3 family. Consists of a catalytic RNA component and at least 4-5 protein subunits.

It is found in the cytoplasm. The catalysed reaction is Endonucleolytic cleavage of RNA, removing 5'-extranucleotides from tRNA precursor.. In terms of biological role, part of ribonuclease P, a protein complex that generates mature tRNA molecules by cleaving their 5'-ends. The protein is Ribonuclease P protein component 3 of Pyrococcus abyssi (strain GE5 / Orsay).